Consider the following 89-residue polypeptide: Putative septation protein SpoVG (89 aa).

This sequence belongs to the SpoVG family.

Functionally, could be involved in septation. This is Putative septation protein SpoVG from Heliobacterium modesticaldum (strain ATCC 51547 / Ice1).